Reading from the N-terminus, the 153-residue chain is Ribosomal RNA large subunit methyltransferase H (153 aa).

S-adenosyl-L-methionine is bound by residues Leu71 and Gly102.

Belongs to the RNA methyltransferase RlmH family. In terms of assembly, homodimer.

Its subcellular location is the cytoplasm. The enzyme catalyses pseudouridine(1915) in 23S rRNA + S-adenosyl-L-methionine = N(3)-methylpseudouridine(1915) in 23S rRNA + S-adenosyl-L-homocysteine + H(+). Its function is as follows. Specifically methylates the pseudouridine at position 1915 (m3Psi1915) in 23S rRNA. The chain is Ribosomal RNA large subunit methyltransferase H from Anaeromyxobacter sp. (strain K).